We begin with the raw amino-acid sequence, 427 residues long: Trigger factor (427 aa).

Residues 163-248 (GDTVVIDFVG…IHEVKTKEVP (86 aa)) form the PPIase FKBP-type domain.

This sequence belongs to the FKBP-type PPIase family. Tig subfamily.

It localises to the cytoplasm. It catalyses the reaction [protein]-peptidylproline (omega=180) = [protein]-peptidylproline (omega=0). Involved in protein export. Acts as a chaperone by maintaining the newly synthesized protein in an open conformation. Functions as a peptidyl-prolyl cis-trans isomerase. This is Trigger factor from Streptococcus agalactiae serotype Ia (strain ATCC 27591 / A909 / CDC SS700).